The chain runs to 94 residues: Integration host factor subunit beta (94 aa).

The protein belongs to the bacterial histone-like protein family. As to quaternary structure, heterodimer of an alpha and a beta chain.

Its function is as follows. This protein is one of the two subunits of integration host factor, a specific DNA-binding protein that functions in genetic recombination as well as in transcriptional and translational control. This is Integration host factor subunit beta from Brucella anthropi (strain ATCC 49188 / DSM 6882 / CCUG 24695 / JCM 21032 / LMG 3331 / NBRC 15819 / NCTC 12168 / Alc 37) (Ochrobactrum anthropi).